The following is a 184-amino-acid chain: Ribosome-recycling factor (184 aa).

Belongs to the RRF family.

The protein localises to the cytoplasm. In terms of biological role, responsible for the release of ribosomes from messenger RNA at the termination of protein biosynthesis. May increase the efficiency of translation by recycling ribosomes from one round of translation to another. The sequence is that of Ribosome-recycling factor from Acinetobacter baumannii (strain SDF).